We begin with the raw amino-acid sequence, 387 residues long: Chorismate synthase (387 aa).

Positions 39 and 45 each coordinate NADP(+). FMN contacts are provided by residues 130–132 (RSS), 251–252 (NA), glycine 295, 310–314 (KPIPT), and arginine 336.

The protein belongs to the chorismate synthase family. As to quaternary structure, homotetramer. Requires FMNH2 as cofactor.

The enzyme catalyses 5-O-(1-carboxyvinyl)-3-phosphoshikimate = chorismate + phosphate. It participates in metabolic intermediate biosynthesis; chorismate biosynthesis; chorismate from D-erythrose 4-phosphate and phosphoenolpyruvate: step 7/7. Functionally, catalyzes the anti-1,4-elimination of the C-3 phosphate and the C-6 proR hydrogen from 5-enolpyruvylshikimate-3-phosphate (EPSP) to yield chorismate, which is the branch point compound that serves as the starting substrate for the three terminal pathways of aromatic amino acid biosynthesis. This reaction introduces a second double bond into the aromatic ring system. The protein is Chorismate synthase of Exiguobacterium sp. (strain ATCC BAA-1283 / AT1b).